The sequence spans 1367 residues: Histone acetyltransferase HAC2 (1367 aa).

Residues 110-151 form a disordered region; sequence TSSIPGSSGSASETNSGSDITKQDFKNDSPSDSKKVQGSSTS. Low complexity predominate over residues 111–127; sequence SSIPGSSGSASETNSGS. The segment covering 130 to 144 has biased composition (basic and acidic residues); the sequence is TKQDFKNDSPSDSKK. 12 tandem repeats follow at residues 188–200, 223–235, 251–263, 286–298, 314–326, 349–361, 377–389, 418–430, 432–444, 459–471, 473–485, and 500–512. The tract at residues 188–512 is 12 X 13 AA approximate repeats; the sequence is KLGTVVDIVE…IGVDIVEPMK (325 aa). Residues 688 to 765 form a PHD-type zinc finger; sequence HQICSPCHSR…EYICPTCLLE (78 aa). The 434-residue stretch at 780-1213 folds into the CBP/p300-type HAT domain; that stretch reads DSGAKDLPET…ILHHLHTSNK (434 aa). Residues 903–905, 922–923, and Trp978 each bind acetyl-CoA; these read LDS and RT. Residues 1094–1157 form a ZZ-type 1; degenerate zinc finger; sequence ELNYSCTRCS…QLSKVQVNGV (64 aa). Cys1099, Cys1102, Cys1123, Cys1126, Cys1225, Cys1228, Cys1240, Cys1243, Cys1249, Cys1252, His1261, and His1263 together coordinate Zn(2+). Residues 1220–1273 form a ZZ-type 2 zinc finger; sequence SSSLTCTACKKDVSTTIYFPCLLCPDYRACTGCYTKNRTLRHLHIFPTLPSANR. The segment at 1274-1359 adopts a TAZ-type zinc-finger fold; the sequence is APSRTVMVLE…NCPVPQCRDR (86 aa).

As to expression, rosette leaves, stems and flowers.

Its subcellular location is the nucleus. The catalysed reaction is L-lysyl-[protein] + acetyl-CoA = N(6)-acetyl-L-lysyl-[protein] + CoA + H(+). Its function is as follows. Acetyltransferase enzyme. Acetylates histones, giving a specific tag for transcriptional activation. No acetyltransferase activity found in vitro. In Arabidopsis thaliana (Mouse-ear cress), this protein is Histone acetyltransferase HAC2 (HAC2).